The chain runs to 574 residues: Choline transporter-like protein ctl1 (574 aa).

Residues Asn-40 and Asn-101 are each glycosylated (N-linked (GlcNAc...) asparagine). Helical transmembrane passes span 144 to 164 (WGLT…LMVW), 189 to 209 (KDAI…VAIP), 211 to 231 (FLYF…VYLL), 246 to 266 (LMLL…YYVW), 291 to 311 (QITL…FIWV), 336 to 356 (WVLA…FHAL), 396 to 416 (YGLC…LHFL), and 434 to 456 (TSAS…VPYM). N-linked (GlcNAc...) asparagine glycosylation is present at Asn-457. Helical transmembrane passes span 485–505 (LLAA…NYSI) and 511–531 (FYGY…IGAI). N-linked (GlcNAc...) asparagine glycosylation is present at Asn-558.

The protein belongs to the CTL (choline transporter-like) family. Interacts with atg9.

The protein resides in the endoplasmic reticulum membrane. It is found in the preautophagosomal structure membrane. Its function is as follows. Required for the normal organization of the preautophagosomal structure (PAS) and for the correct subcellular location of atg9. This chain is Choline transporter-like protein ctl1 (ctl1), found in Schizosaccharomyces pombe (strain 972 / ATCC 24843) (Fission yeast).